The primary structure comprises 492 residues: N-succinylglutamate 5-semialdehyde dehydrogenase (492 aa).

An NAD(+)-binding site is contributed by 220-225 (GSANTG). Catalysis depends on residues Glu-243 and Cys-277.

The protein belongs to the aldehyde dehydrogenase family. AstD subfamily.

The catalysed reaction is N-succinyl-L-glutamate 5-semialdehyde + NAD(+) + H2O = N-succinyl-L-glutamate + NADH + 2 H(+). Its pathway is amino-acid degradation; L-arginine degradation via AST pathway; L-glutamate and succinate from L-arginine: step 4/5. Its function is as follows. Catalyzes the NAD-dependent reduction of succinylglutamate semialdehyde into succinylglutamate. In Escherichia coli (strain 55989 / EAEC), this protein is N-succinylglutamate 5-semialdehyde dehydrogenase.